A 349-amino-acid chain; its full sequence is Phosphoribosylformylglycinamidine cyclo-ligase (349 aa).

It belongs to the AIR synthase family.

The protein localises to the cytoplasm. The catalysed reaction is 2-formamido-N(1)-(5-O-phospho-beta-D-ribosyl)acetamidine + ATP = 5-amino-1-(5-phospho-beta-D-ribosyl)imidazole + ADP + phosphate + H(+). Its pathway is purine metabolism; IMP biosynthesis via de novo pathway; 5-amino-1-(5-phospho-D-ribosyl)imidazole from N(2)-formyl-N(1)-(5-phospho-D-ribosyl)glycinamide: step 2/2. The polypeptide is Phosphoribosylformylglycinamidine cyclo-ligase (Lactobacillus helveticus (strain DPC 4571)).